The primary structure comprises 358 residues: Mitogen-activated protein kinase 1 (358 aa).

Residue A2 is modified to N-acetylalanine. The region spanning 23-311 (YTNLSYIGEG…VEQALAHPYL (289 aa)) is the Protein kinase domain. At S27 the chain carries Phosphoserine; by SGK1. ATP-binding positions include 29 to 37 (IGEGAYGMV) and K52. D147 serves as the catalytic Proton acceptor. T183 is modified (phosphothreonine; by MAP2K1 and MAP2K2). The TXY signature appears at 183–185 (TEY). At Y185 the chain carries Phosphotyrosine; by MAP2K1 and MAP2K2. The residue at position 188 (T188) is a Phosphothreonine; by autocatalysis. Residues S244, S246, and S282 each carry the phosphoserine modification.

Belongs to the protein kinase superfamily. CMGC Ser/Thr protein kinase family. MAP kinase subfamily. As to quaternary structure, binds both upstream activators and downstream substrates in multimolecular complexes. This interaction inhibits its tyrosine-kinase activity. Interacts with ADAM15, ARHGEF2, ARRB2, DAPK1 (via death domain), HSF4, IER3, IPO7, NISCH, SGK1, and isoform 1 of NEK2. Interacts (via phosphorylated form) with TPR (via C-terminal region and phosphorylated form); the interaction requires dimerization of MAPK1/ERK2 and increases following EGF stimulation. Interacts with MAP2K1. Interacts with DUSP6. Interacts (phosphorylated form) with CAV2 ('Tyr-19'-phosphorylated form); the interaction, promoted by insulin, leads to nuclear location and MAPK1 activation. Interacts with DCC. Interacts with MORG1. Interacts with PEA15. Interacts with MKNK2. MKNK2 isoform 1 binding prevents from dephosphorylation and inactivation. The phosphorylated form interacts with PML. Interacts with STYX. Interacts with CDK2AP2. Interacts with CAVIN4. Interacts with DUSP7; the interaction enhances DUSP7 phosphatase activity. Interacts with GIT1; this interaction is necessary for MAPK1 localization to focal adhesions. Interacts with ZNF263. Interacts with phosphoglycerate kinase PGK1; the interaction is direct, occurs under hypoxic conditions, and promotes interaction between PGK1 and PIN1. Mg(2+) is required as a cofactor. Post-translationally, dually phosphorylated on Thr-183 and Tyr-185, which activates the enzyme. Ligand-activated ALK induces tyrosine phosphorylation. Dephosphorylated by PTPRJ at Tyr-185. Phosphorylated upon FLT3 and KIT signaling. Dephosphorylated by DUSP1 and DUSP2 at Thr-183 and Tyr-185. In terms of processing, ISGylated. Ubiquitinated by TRIM15 via 'Lys-63'-linked ubiquitination; leading to activation. Deubiquitinated by CYLD. As to expression, widely expressed.

The protein localises to the cytoplasm. It is found in the cytoskeleton. The protein resides in the spindle. It localises to the nucleus. Its subcellular location is the microtubule organizing center. The protein localises to the centrosome. It is found in the membrane. The protein resides in the caveola. It localises to the cell junction. Its subcellular location is the focal adhesion. The catalysed reaction is L-seryl-[protein] + ATP = O-phospho-L-seryl-[protein] + ADP + H(+). It carries out the reaction L-threonyl-[protein] + ATP = O-phospho-L-threonyl-[protein] + ADP + H(+). Its activity is regulated as follows. Phosphorylated by MAP2K1/MEK1 and MAP2K2/MEK2 on Thr-183 and Tyr-185 in response to external stimuli like insulin or NGF. Both phosphorylations are required for activity. This phosphorylation causes dramatic conformational changes, which enable full activation and interaction of MAPK1/ERK2 with its substrates. Phosphorylation on Ser-27 by SGK1 results in its activation by enhancing its interaction with MAP2K1/MEK1 and MAP2K2/MEK2. Dephosphorylated and inactivated by DUSP1, DUSP3, DUSP6 and DUSP9. Inactivated by pyrimidylpyrrole inhibitors. Serine/threonine kinase which acts as an essential component of the MAP kinase signal transduction pathway. MAPK1/ERK2 and MAPK3/ERK1 are the 2 MAPKs which play an important role in the MAPK/ERK cascade. They participate also in a signaling cascade initiated by activated KIT and KITLG/SCF. Depending on the cellular context, the MAPK/ERK cascade mediates diverse biological functions such as cell growth, adhesion, survival and differentiation through the regulation of transcription, translation, cytoskeletal rearrangements. The MAPK/ERK cascade also plays a role in initiation and regulation of meiosis, mitosis, and postmitotic functions in differentiated cells by phosphorylating a number of transcription factors. About 160 substrates have already been discovered for ERKs. Many of these substrates are localized in the nucleus, and seem to participate in the regulation of transcription upon stimulation. However, other substrates are found in the cytosol as well as in other cellular organelles, and those are responsible for processes such as translation, mitosis and apoptosis. Moreover, the MAPK/ERK cascade is also involved in the regulation of the endosomal dynamics, including lysosome processing and endosome cycling through the perinuclear recycling compartment (PNRC); as well as in the fragmentation of the Golgi apparatus during mitosis. The substrates include transcription factors (such as ATF2, BCL6, ELK1, ERF, FOS, HSF4 or SPZ1), cytoskeletal elements (such as CANX, CTTN, GJA1, MAP2, MAPT, PXN, SORBS3 or STMN1), regulators of apoptosis (such as BAD, BTG2, CASP9, DAPK1, IER3, MCL1 or PPARG), regulators of translation (such as EIF4EBP1 and FXR1) and a variety of other signaling-related molecules (like ARHGEF2, DCC, FRS2 or GRB10). Protein kinases (such as RAF1, RPS6KA1/RSK1, RPS6KA3/RSK2, RPS6KA2/RSK3, RPS6KA6/RSK4, SYK, MKNK1/MNK1, MKNK2/MNK2, RPS6KA5/MSK1, RPS6KA4/MSK2, MAPKAPK3 or MAPKAPK5) and phosphatases (such as DUSP1, DUSP4, DUSP6 or DUSP16) are other substrates which enable the propagation the MAPK/ERK signal to additional cytosolic and nuclear targets, thereby extending the specificity of the cascade. Mediates phosphorylation of TPR in response to EGF stimulation. May play a role in the spindle assembly checkpoint. Phosphorylates PML and promotes its interaction with PIN1, leading to PML degradation. Phosphorylates CDK2AP2. Phosphorylates phosphoglycerate kinase PGK1 under hypoxic conditions to promote its targeting to the mitochondrion and suppress the formation of acetyl-coenzyme A from pyruvate. In terms of biological role, acts as a transcriptional repressor. Binds to a [GC]AAA[GC] consensus sequence. Repress the expression of interferon gamma-induced genes. Seems to bind to the promoter of CCL5, DMP1, IFIH1, IFITM1, IRF7, IRF9, LAMP3, OAS1, OAS2, OAS3 and STAT1. Transcriptional activity is independent of kinase activity. This chain is Mitogen-activated protein kinase 1, found in Mus musculus (Mouse).